The sequence spans 159 residues: MRCPFCRHDDTQVVDSRVSEDGAAIRRRRRCSACDKRFTTYERVELALPAVVKKDGSRTEFDRRKIVASMKLALRKRPVAADAIDAAVARIEYQLLASGEREVRSEKLGELVMNELRQLDTIAYVRFASVYRRFEDVSEFADVIEEFRRAAPAKPPRKR.

Residues 3 to 34 (CPFCRHDDTQVVDSRVSEDGAAIRRRRRCSAC) fold into a zinc finger. The ATP-cone domain occupies 49 to 139 (PAVVKKDGSR…VYRRFEDVSE (91 aa)).

The protein belongs to the NrdR family. The cofactor is Zn(2+).

Negatively regulates transcription of bacterial ribonucleotide reductase nrd genes and operons by binding to NrdR-boxes. This chain is Transcriptional repressor NrdR, found in Burkholderia thailandensis (strain ATCC 700388 / DSM 13276 / CCUG 48851 / CIP 106301 / E264).